The chain runs to 133 residues: Acyl-CoA thioester hydrolase YciA (133 aa).

Residues 8–123 (PQGELVLRTL…LFIYVAVDPD (116 aa)) form the HotDog ACOT-type domain.

It belongs to the acyl coenzyme A hydrolase family.

Catalyzes the hydrolysis of the thioester bond in palmitoyl-CoA and malonyl-CoA. This Salmonella typhi protein is Acyl-CoA thioester hydrolase YciA (yciA).